A 212-amino-acid chain; its full sequence is Peptide methionine sulfoxide reductase MsrA (212 aa).

C52 is a catalytic residue.

This sequence belongs to the MsrA Met sulfoxide reductase family.

The enzyme catalyses L-methionyl-[protein] + [thioredoxin]-disulfide + H2O = L-methionyl-(S)-S-oxide-[protein] + [thioredoxin]-dithiol. It carries out the reaction [thioredoxin]-disulfide + L-methionine + H2O = L-methionine (S)-S-oxide + [thioredoxin]-dithiol. Its function is as follows. Has an important function as a repair enzyme for proteins that have been inactivated by oxidation. Catalyzes the reversible oxidation-reduction of methionine sulfoxide in proteins to methionine. The sequence is that of Peptide methionine sulfoxide reductase MsrA from Escherichia coli O17:K52:H18 (strain UMN026 / ExPEC).